We begin with the raw amino-acid sequence, 119 residues long: Small ribosomal subunit protein uS13m (119 aa).

Belongs to the universal ribosomal protein uS13 family. Part of the small ribosomal subunit.

It is found in the mitochondrion. Located at the top of the head of the small subunit, it contacts several helices of the small subunit rRNA. The chain is Small ribosomal subunit protein uS13m (RPS13) from Prototheca wickerhamii.